Consider the following 367-residue polypeptide: tRNA-specific 2-thiouridylase MnmA (367 aa).

Residues 9-16 and M35 each bind ATP; that span reads GLSGGVDS. The interval 95–97 is interaction with target base in tRNA; it reads NPD. The active-site Nucleophile is the C100. Residues C100 and C196 are joined by a disulfide bond. G124 lines the ATP pocket. An interaction with tRNA region spans residues 146-148; that stretch reads KDQ. Residue C196 is the Cysteine persulfide intermediate of the active site. An interaction with tRNA region spans residues 308–309; that stretch reads RY.

Belongs to the MnmA/TRMU family.

It localises to the cytoplasm. It carries out the reaction S-sulfanyl-L-cysteinyl-[protein] + uridine(34) in tRNA + AH2 + ATP = 2-thiouridine(34) in tRNA + L-cysteinyl-[protein] + A + AMP + diphosphate + H(+). Its function is as follows. Catalyzes the 2-thiolation of uridine at the wobble position (U34) of tRNA, leading to the formation of s(2)U34. The polypeptide is tRNA-specific 2-thiouridylase MnmA (Nitrosococcus oceani (strain ATCC 19707 / BCRC 17464 / JCM 30415 / NCIMB 11848 / C-107)).